We begin with the raw amino-acid sequence, 143 residues long: Large ribosomal subunit protein uL15 (143 aa).

The segment at 1-59 is disordered; sequence MELNTITPGQGAKHAKRRVGRGIGSGLGKTAGRGHKGQKSRSGGYHKVGFEGGQMPMQR. Positions 21 to 31 are enriched in gly residues; it reads RGIGSGLGKTA.

It belongs to the universal ribosomal protein uL15 family. Part of the 50S ribosomal subunit.

Binds to the 23S rRNA. The chain is Large ribosomal subunit protein uL15 from Polaromonas naphthalenivorans (strain CJ2).